The chain runs to 360 residues: D-alanine--D-alanine ligase (360 aa).

The ATP-grasp domain maps to 134-343; that stretch reads KILAQRVGVP…YTELITRLIQ (210 aa). Position 169–224 (169–224) interacts with ATP; the sequence is AEKLGHDMFVKPSNQGSSVGVNHVTNAEEYAAALEEAFKYDDKVLVEETVPGTEVE. Residues Asp-297, Glu-310, and Asn-312 each contribute to the Mg(2+) site.

This sequence belongs to the D-alanine--D-alanine ligase family. Mg(2+) serves as cofactor. Requires Mn(2+) as cofactor.

Its subcellular location is the cytoplasm. The catalysed reaction is 2 D-alanine + ATP = D-alanyl-D-alanine + ADP + phosphate + H(+). It participates in cell wall biogenesis; peptidoglycan biosynthesis. Its function is as follows. Cell wall formation. The polypeptide is D-alanine--D-alanine ligase (Lactobacillus acidophilus (strain ATCC 700396 / NCK56 / N2 / NCFM)).